Here is a 417-residue protein sequence, read N- to C-terminus: Serpin H1 (417 aa).

A signal peptide spans 1–17 (MRSLLLGTLCLLAVALA). Lysine 93 is subject to N6-succinyllysine. N-linked (GlcNAc...) asparagine glycans are attached at residues asparagine 119 and asparagine 124. A Phosphoserine modification is found at serine 140. Position 206 is an N6-acetyllysine (lysine 206). Residue lysine 295 is modified to N6-succinyllysine. Lysine 318 bears the N6-acetyllysine mark. Asparagine 394 is a glycosylation site (N-linked (GlcNAc...) asparagine). The Prevents secretion from ER signature appears at 414–417 (RDEL).

It belongs to the serpin family.

It is found in the endoplasmic reticulum lumen. Functionally, binds specifically to collagen. Could be involved as a chaperone in the biosynthetic pathway of collagen. This chain is Serpin H1 (Serpinh1), found in Mus musculus (Mouse).